The sequence spans 166 residues: Endoribonuclease YbeY (166 aa).

Residues His-132, His-136, and His-142 each coordinate Zn(2+).

Belongs to the endoribonuclease YbeY family. Zn(2+) serves as cofactor.

It is found in the cytoplasm. In terms of biological role, single strand-specific metallo-endoribonuclease involved in late-stage 70S ribosome quality control and in maturation of the 3' terminus of the 16S rRNA. In Clostridium botulinum (strain Alaska E43 / Type E3), this protein is Endoribonuclease YbeY.